Consider the following 79-residue polypeptide: Sec-independent protein translocase protein TatA (79 aa).

The helical transmembrane segment at 1-21 (MGGISIWQLLIIALIVILLFG) threads the bilayer. The disordered stretch occupies residues 42–79 (AMTSETSEEEKKALEDSQTAQTSQQAEKKPESKDKEQA). The span at 57–66 (DSQTAQTSQQ) shows a compositional bias: polar residues. Basic and acidic residues predominate over residues 67–79 (AEKKPESKDKEQA).

This sequence belongs to the TatA/E family. As to quaternary structure, the Tat system comprises two distinct complexes: a TatABC complex, containing multiple copies of TatA, TatB and TatC subunits, and a separate TatA complex, containing only TatA subunits. Substrates initially bind to the TatABC complex, which probably triggers association of the separate TatA complex to form the active translocon.

The protein localises to the cell inner membrane. Its function is as follows. Part of the twin-arginine translocation (Tat) system that transports large folded proteins containing a characteristic twin-arginine motif in their signal peptide across membranes. TatA could form the protein-conducting channel of the Tat system. This is Sec-independent protein translocase protein TatA from Shewanella denitrificans (strain OS217 / ATCC BAA-1090 / DSM 15013).